We begin with the raw amino-acid sequence, 202 residues long: Imidazoleglycerol-phosphate dehydratase (202 aa).

It belongs to the imidazoleglycerol-phosphate dehydratase family.

The protein resides in the cytoplasm. It catalyses the reaction D-erythro-1-(imidazol-4-yl)glycerol 3-phosphate = 3-(imidazol-4-yl)-2-oxopropyl phosphate + H2O. The protein operates within amino-acid biosynthesis; L-histidine biosynthesis; L-histidine from 5-phospho-alpha-D-ribose 1-diphosphate: step 6/9. In Rhizobium meliloti (strain 1021) (Ensifer meliloti), this protein is Imidazoleglycerol-phosphate dehydratase.